Consider the following 435-residue polypeptide: GPI-anchor transamidase component PIGU (435 aa).

The Cytoplasmic portion of the chain corresponds to 1–3; sequence MAA. The helical transmembrane segment at 4–22 threads the bilayer; that stretch reads PLALVLVVAVTVRAALFRS. Over 23 to 78 the chain is Lumenal; the sequence is SLAEFISERVEVVSPLSSWKRVVEGLSLLDLGVSPYSGAVFHETPLIIYLFHFLID. The helical transmembrane segment at 79 to 99 threads the bilayer; sequence YAELVFMITDALTAIALYFAI. Residues 100 to 136 are Cytoplasmic-facing; the sequence is QDFNKVVFKKQKLLLELDQYAPDVAELIRTPMEMRYI. The next 4 helical transmembrane spans lie at 137–158, 159–178, 179–194, and 195–205; these read PLKV…VAKS, TCAI…IKGS, VFLS…YQTL, and YPVTLFAPGLL. Residues 206–222 are Cytoplasmic-facing; sequence YLLQRQYIPVKVKSKAF. Lys-216 lines the a cardiolipin pocket. A helical membrane pass occupies residues 223-244; it reads WIFSWEYAMMYIGSLVVIVCLS. Residues 245-286 lie on the Lumenal side of the membrane; the sequence is FFLLSSWDFIPAVYGFILSVPDLTPNIGLFWYFFAEMFEHFS. The chain crosses the membrane as a helical span at residues 287 to 306; that stretch reads LFFVCVFQINVFFYTVPLAI. Over 307 to 311 the chain is Cytoplasmic; sequence KLKEH. Residue Lys-309 coordinates a cardiolipin. Transmembrane regions (helical) follow at residues 312-331 and 332-345; these read PIFF…SYPT and VGDV…FPVW. Residues 346 to 354 lie on the Cytoplasmic side of the membrane; sequence NHLYRFLRN. Residues 355–372 traverse the membrane as a helical segment; it reads VFVLTCIIVVCSLLFPVL. Residues 373–384 are Lumenal-facing; the sequence is WHLWIYAGSANS. Residues Asn-383 and Asn-385 each coordinate a 2-acyl-6-[6-phosphoethanolamine-alpha-D-mannosyl-(1-&gt;2)-6-phosphoethanolamine-alpha-D-mannosyl-(1-&gt;6)-2-phosphoethanolamine-alpha-D-mannosyl-(1-&gt;4)-alpha-D-glucosaminyl]-1-(1-radyl,2-acyl-sn-glycero-3-phospho)-1D-myo-inositol. The chain crosses the membrane as a helical span at residues 385 to 406; the sequence is NFFYAITLTFNVGQILLISDYF. The Cytoplasmic segment spans residues 407–435; it reads YAFLRREYYLTHGLYLTAKDGTEAMLVLK.

This sequence belongs to the PIGU family. Heteropentamer. Part of the GPI-anchor transamidase complex, consisting of PIGK, PIGT, PIGS, PIGU and GAA1.

It localises to the endoplasmic reticulum membrane. It functions in the pathway glycolipid biosynthesis; glycosylphosphatidylinositol-anchor biosynthesis. In terms of biological role, component of the glycosylphosphatidylinositol-anchor (GPI-anchor) transamidase (GPI-T) complex that catalyzes the formation of the linkage between a proprotein and a GPI-anchor and participates in GPI anchored protein biosynthesis. Binds the lipid portion of GPI-anchor. May act as an organizer in the transmembrane layer to recruit other subunits, and thus is essential for assembly of the complex. This chain is GPI-anchor transamidase component PIGU, found in Cricetulus griseus (Chinese hamster).